The chain runs to 399 residues: O-glucosyltransferase rumi homolog (399 aa).

Positions 1–18 (MHFIIGIVICLSLSVIQS) are cleaved as a signal peptide. N-linked (GlcNAc...) asparagine glycosylation is found at asparagine 19 and asparagine 67. 4 disulfides stabilise this stretch: cysteine 66-cysteine 73, cysteine 71-cysteine 373, cysteine 118-cysteine 124, and cysteine 277-cysteine 300. Aspartate 149 acts as the Proton donor/acceptor in catalysis. The tract at residues 189 to 194 (AIALYP) is interaction with the consensus sequence C-X-S-X-[PA]-C in peptide substrates. UDP-alpha-D-glucose is bound by residues 224–228 (RGSRT), arginine 232, 271–273 (VTL), and 289–293 (AASFR).

It belongs to the glycosyltransferase 90 family.

The protein resides in the endoplasmic reticulum lumen. It is found in the secreted. Its pathway is protein modification; protein glycosylation. Its function is as follows. Protein O-glucosyltransferase. Catalyzes the reaction that attaches glucose through an O-glycosidic linkage to a conserved serine residue found in the consensus sequence C-X-S-X-[PA]-C in epidermal growth factor-like repeats. Regulates Notch signaling by glucosylating Notch in the ER, glucosylation is required for the correct folding and cleavage of Notch. This chain is O-glucosyltransferase rumi homolog, found in Anopheles gambiae (African malaria mosquito).